The sequence spans 286 residues: Ferric acinetobactin reductase (286 aa).

An FAD-binding FR-type domain is found at 25–131; that stretch reads MEQLEMTIVS…IGPRPHFIPN (107 aa). FAD-binding residues include arginine 79, valine 80, threonine 82, aspartate 96, valine 98, histidine 100, aspartate 102, serine 104, alanine 106, arginine 250, glycine 252, and serine 255.

It belongs to the SIP oxidoreductase family. As to quaternary structure, monomer in solution. Requires FAD as cofactor.

It carries out the reaction 2 a Fe(II)-siderophore + NAD(+) + H(+) = 2 a Fe(III)-siderophore + NADH. The catalysed reaction is 2 a Fe(II)-siderophore + NADP(+) + H(+) = 2 a Fe(III)-siderophore + NADPH. Functionally, ferric-siderophore reductase involved in iron removal from the siderophores after their transport into the cell. Interacts with the siderophores acinetobactin (Acb) and preacinetobactin (pre-Acb) and catalyzes the reduction of the ferric iron bound to the siderophores to ferrous iron, resulting in destabilization of the siderophore chelation complex and entrance of ferrous iron into the intracellular pool of bioavailable metals. Can use NADH and NADPH as electron donors in vitro, but the reduction rate is very slow, suggesting that NADH and NADPH are not the physiological partners of BauF. The sequence is that of Ferric acinetobactin reductase from Acinetobacter baumannii.